The following is a 206-amino-acid chain: Large ribosomal subunit protein uL4 (206 aa).

This sequence belongs to the universal ribosomal protein uL4 family. As to quaternary structure, part of the 50S ribosomal subunit.

In terms of biological role, one of the primary rRNA binding proteins, this protein initially binds near the 5'-end of the 23S rRNA. It is important during the early stages of 50S assembly. It makes multiple contacts with different domains of the 23S rRNA in the assembled 50S subunit and ribosome. Forms part of the polypeptide exit tunnel. This is Large ribosomal subunit protein uL4 from Nitrobacter hamburgensis (strain DSM 10229 / NCIMB 13809 / X14).